The sequence spans 446 residues: Sensor protein PfeS (446 aa).

At 1–9 the chain is on the cytoplasmic side; that stretch reads MRRHPLLWK. The chain crosses the membrane as a helical span at residues 10–30; sequence LALLQVGFCLLLTWLIYTWGL. Residues 31 to 155 are Periplasmic-facing; it reads SVERSTYFLA…LLPGGLTPWT (125 aa). A helical membrane pass occupies residues 156–176; the sequence is HLVTHGIVPTLLAALLGLLLY. An HAMP domain is found at 177-233; it reads RHLVVPLNRLRDRADALRADELESTPLAAPLAARRDELGELAQALEHMAERLRLSLA. The Cytoplasmic portion of the chain corresponds to 177-446; that stretch reads RHLVVPLNRL…CLHLWLPAAA (270 aa). The 206-residue stretch at 241 to 446 folds into the Histidine kinase domain; that stretch reads TLSHELRTPL…CLHLWLPAAA (206 aa). Histidine 244 is subject to Phosphohistidine; by autocatalysis.

The protein resides in the cell inner membrane. The catalysed reaction is ATP + protein L-histidine = ADP + protein N-phospho-L-histidine.. Member of the two-component regulatory system PfeR/PfeS. May activate PfeR by phosphorylation. This chain is Sensor protein PfeS (pfeS), found in Pseudomonas aeruginosa (strain ATCC 15692 / DSM 22644 / CIP 104116 / JCM 14847 / LMG 12228 / 1C / PRS 101 / PAO1).